The sequence spans 848 residues: DNA mismatch repair protein MutS (848 aa).

ATP is bound at residue 605 to 612; the sequence is GPNMAGKS.

The protein belongs to the DNA mismatch repair MutS family.

Functionally, this protein is involved in the repair of mismatches in DNA. It is possible that it carries out the mismatch recognition step. This protein has a weak ATPase activity. In Leptospira interrogans serogroup Icterohaemorrhagiae serovar Lai (strain 56601), this protein is DNA mismatch repair protein MutS.